A 233-amino-acid chain; its full sequence is MKSLCYLNQEDCFPAAHKALTDPNGLIAIGGDLQPERLLSAYQQGIFPWFNQGEPILWWTPDPRAVFQLSDYRPSRSLMKTLKRQTWRFTINKAFDAVIHQCAALRQEGTWITPAIKAAYGQLHAQGDAHSIEVWQGEQLVGGLYGIAVGKIFCGESMFHLETDASKAAFHLLVTHLRRFEFTLIDAQVMNPHLARLGAKPLPREAFLTQLAQLKHQHSPATAWQPQEVKLGY.

Belongs to the L/F-transferase family.

It localises to the cytoplasm. It carries out the reaction N-terminal L-lysyl-[protein] + L-leucyl-tRNA(Leu) = N-terminal L-leucyl-L-lysyl-[protein] + tRNA(Leu) + H(+). The catalysed reaction is N-terminal L-arginyl-[protein] + L-leucyl-tRNA(Leu) = N-terminal L-leucyl-L-arginyl-[protein] + tRNA(Leu) + H(+). The enzyme catalyses L-phenylalanyl-tRNA(Phe) + an N-terminal L-alpha-aminoacyl-[protein] = an N-terminal L-phenylalanyl-L-alpha-aminoacyl-[protein] + tRNA(Phe). In terms of biological role, functions in the N-end rule pathway of protein degradation where it conjugates Leu, Phe and, less efficiently, Met from aminoacyl-tRNAs to the N-termini of proteins containing an N-terminal arginine or lysine. The sequence is that of Leucyl/phenylalanyl-tRNA--protein transferase from Shewanella denitrificans (strain OS217 / ATCC BAA-1090 / DSM 15013).